The sequence spans 434 residues: Pre-B-cell leukemia transcription factor 3 (434 aa).

The disordered stretch occupies residues 20–41 (SVQGGMALPPPPHGHEGADGDG). Basic and acidic residues predominate over residues 32-41 (HGHEGADGDG). A PBC domain is found at 41–234 (GRKQDIGDIL…VMILRSRFLD (194 aa)). Residues 48–127 (DILHQIMTIT…EGVSGPEKGG (80 aa)) are PBC-A. Residues 130 to 234 (AAAAAAAAAS…VMILRSRFLD (105 aa)) are PBC-B. The segment at residues 235–297 (ARRKRRNFSK…NKRIRYKKNI (63 aa)) is a DNA-binding region (homeobox; TALE-type). Positions 326–341 (NQTNSPTTPNSGSSGS) are enriched in low complexity. Disordered regions lie at residues 326 to 349 (NQTN…NSGD) and 403 to 434 (LNAN…DTSN). The segment covering 403–422 (LNANGGWQDATTPSSVTSPT) has biased composition (polar residues).

This sequence belongs to the TALE/PBX homeobox family. In terms of assembly, interacts with PBXIP1. Ubiquitously expressed.

The protein localises to the nucleus. In terms of biological role, transcriptional activator that binds the sequence 5'-ATCAATCAA-3'. This chain is Pre-B-cell leukemia transcription factor 3 (PBX3), found in Homo sapiens (Human).